A 346-amino-acid polypeptide reads, in one-letter code: uncharacterized protein (346 aa).

A helical transmembrane segment spans residues 7-27 (AMVILLIICGTYVLFIQYGSV). Residues 29-48 (EKKSNDSEPQVSNEEAQSGK) are disordered. The segment covering 35 to 44 (SEPQVSNEEA) has biased composition (polar residues). In terms of domain architecture, SCP spans 231-342 (LDLTNVIRVK…VDRKYYTQNF (112 aa)).

The protein resides in the cell membrane. This is an uncharacterized protein from Bacillus subtilis (strain 168).